The sequence spans 138 residues: Small ribosomal subunit protein uS11c (138 aa).

The interval 1–21 is disordered; the sequence is MTKAIQKIGSRRNGRIASRKN. Residues 9 to 21 show a composition bias toward basic residues; the sequence is GSRRNGRIASRKN.

It belongs to the universal ribosomal protein uS11 family. As to quaternary structure, part of the 30S ribosomal subunit.

The protein resides in the plastid. It is found in the chloroplast. The sequence is that of Small ribosomal subunit protein uS11c from Ceratophyllum demersum (Rigid hornwort).